The chain runs to 964 residues: Translation initiation factor IF-2 (964 aa).

A disordered region spans residues 49-357 (QIGSAEPADD…QEFDEMQAPL (309 aa)). Residues 62-85 (AKPAARKSQTSSKKTSKETTTAKP) are compositionally biased toward low complexity. Residues 86–102 (APGPKPGPGPKPTPGPR) show a composition bias toward pro residues. Positions 103–117 (PGSSSGPKPGRSSAA) are enriched in low complexity. The span at 159–169 (PHAPAPKPKPG) shows a compositional bias: pro residues. Composition is skewed to low complexity over residues 190–212 (GLPSAARPGPRPGAGRRTGAPRP) and 242–251 (GQGERMPRPG). Composition is skewed to gly residues over residues 252–261 (GSQGSRGGSG) and 284–334 (GRGG…GRGG). Basic residues predominate over residues 335–346 (GGRRGRKSRKQR). The region spanning 458-629 (ARPPVVTVMG…AIVLTADAAL (172 aa)) is the tr-type G domain. Residues 467 to 474 (GHVDHGKT) form a G1 region. 467–474 (GHVDHGKT) contributes to the GTP binding site. Residues 492–496 (GITQA) form a G2 region. Residues 517-520 (DTPG) form a G3 region. Residues 517–521 (DTPGH) and 571–574 (NKID) contribute to the GTP site. The tract at residues 571–574 (NKID) is G4. Residues 607–609 (SAR) are G5.

It belongs to the TRAFAC class translation factor GTPase superfamily. Classic translation factor GTPase family. IF-2 subfamily.

The protein resides in the cytoplasm. In terms of biological role, one of the essential components for the initiation of protein synthesis. Protects formylmethionyl-tRNA from spontaneous hydrolysis and promotes its binding to the 30S ribosomal subunits. Also involved in the hydrolysis of GTP during the formation of the 70S ribosomal complex. The polypeptide is Translation initiation factor IF-2 (Cutibacterium acnes (strain DSM 16379 / KPA171202) (Propionibacterium acnes)).